The following is a 579-amino-acid chain: uncharacterized protein (579 aa).

The next 12 membrane-spanning stretches (helical) occupy residues 20-40 (ALWA…VVAI), 54-74 (ATVV…MLVA), 86-106 (LYLI…LSSG), 142-162 (GVAL…GPLA), 174-194 (WIFF…AYLI), 204-224 (FDWF…FGLQ), 234-254 (WIWA…YWQA), 279-299 (IAII…YAQA), 310-330 (VLFA…GMII), 335-355 (PLCV…WLLC), 366-386 (LVLP…PLTV), and 467-487 (MLLP…LVDF). Positions 516-579 (REPEEDCDTQ…DTESTAPSAL (64 aa)) are disordered. Positions 526 to 540 (PLRASRPAAAAASRS) are enriched in low complexity. Positions 570 to 579 (DTESTAPSAL) are enriched in polar residues.

The protein belongs to the major facilitator superfamily. EmrB family.

The protein resides in the cell membrane. This is an uncharacterized protein from Mycobacterium tuberculosis (strain ATCC 25618 / H37Rv).